The following is a 771-amino-acid chain: Hyperosmolality-gated Ca2+ permeable channel 1.2 (771 aa).

The Extracellular portion of the chain corresponds to 1–4 (MATL). A helical membrane pass occupies residues 5–27 (QDIGVSAGINILSAFVFFIIFAV). Residues 28 to 100 (LRLQPFNDRV…AGLDSVVYLR (73 aa)) lie on the Cytoplasmic side of the membrane. Residues 101 to 125 (IYWLGLKIFTPIAVLAWAVLVPVNW) form a helical membrane-spanning segment. The Extracellular segment spans residues 126 to 156 (TNNTLEMAKQLRNVTSSDIDKLSVSNIPEYS). The helical transmembrane segment at 157-178 (MRFWTHIVMAYAFTIWTCYVLM) threads the bilayer. Residues 179-374 (KEYETIANMR…AIPYVSLTVR (196 aa)) lie on the Cytoplasmic side of the membrane. A helical membrane pass occupies residues 375–401 (RLIMHVAFFFLTFFFIVPIAFVQSLAT). Over 402–419 (IEGIVKAAPFLKFIVDDK) the chain is Extracellular. Residues 420–445 (FMKSVIQGFLPGIALKLFLAFLPSIL) traverse the membrane as a helical segment. Topologically, residues 446–462 (MIMSKFEGFTSISSLER) are cytoplasmic. The helical transmembrane segment at 463-485 (RAAFRYYIFNLVNVFLASVIAGA) threads the bilayer. Residues 486–504 (AFEQLNSFLNQSANQIPKT) are Extracellular-facing. Residues 505-533 (IGVAIPMKATFFITYIMVDGWAGVAGEIL) traverse the membrane as a helical segment. The Cytoplasmic segment spans residues 534 to 566 (MLKPLIMFHLKNAFLVKTDKDREEAMDPGSIGF). The helical transmembrane segment at 567 to 588 (NTGEPRIQLYFLLGLVYAPVTP) threads the bilayer. Methionine 589 is a topological domain (extracellular). The chain crosses the membrane as a helical span at residues 590-605 (LLPFILVFFALAYIVY). Over 606-625 (RHQIINVYNQEYESAAAFWP) the chain is Cytoplasmic. A helical transmembrane segment spans residues 626-648 (DVHGRVIAALVISQLLLMGLLGT). Over 649–651 (KHA) the chain is Extracellular. Residues 652 to 670 (ALAAPFLIALPVLTIGFHH) form a helical membrane-spanning segment. The Cytoplasmic segment spans residues 671 to 771 (FCKGRYEPAF…PSLPFSGKLV (101 aa)). A disordered region spans residues 741 to 771 (PTKRQSRRNTPAPSIISGDDSPSLPFSGKLV).

Belongs to the CSC1 (TC 1.A.17) family. As to quaternary structure, homodimer.

It localises to the membrane. Activated by hyperosmotic shock after mannitol or NaCl treatment. Activated by mechanical pressure: activated in response to membrane stretch and poke. Membrane lipids play a key role in mechanosensation by acting as a wall mainly formed by lipid head groups. Its function is as follows. Acts as an osmosensitive calcium-permeable cation channel. Specifically conducts cations including Ca(2+), K(+) and Na(+) in vitro. Inactivation or closure of the channel is calcium-dependent. Mechanosensitive ion channel that converts mechanical stimuli into a flow of ions: activated in response to membrane stretch and poke. The protein is Hyperosmolality-gated Ca2+ permeable channel 1.2 of Arabidopsis thaliana (Mouse-ear cress).